Reading from the N-terminus, the 179-residue chain is Deoxyuridine 5'-triphosphate nucleotidohydrolase (179 aa).

Residues 90-92, asparagine 103, 107-109, and lysine 117 each bind substrate; these read RSG and TVD.

This sequence belongs to the dUTPase family. Requires Mg(2+) as cofactor.

It catalyses the reaction dUTP + H2O = dUMP + diphosphate + H(+). It participates in pyrimidine metabolism; dUMP biosynthesis; dUMP from dCTP (dUTP route): step 2/2. In terms of biological role, this enzyme is involved in nucleotide metabolism: it produces dUMP, the immediate precursor of thymidine nucleotides and it decreases the intracellular concentration of dUTP so that uracil cannot be incorporated into DNA. The protein is Deoxyuridine 5'-triphosphate nucleotidohydrolase of Thermobifida fusca (strain YX).